The sequence spans 437 residues: MSQPTITVVGAGLAGSEAAWQIAQAGVKVKLYEMRPKTQTPAHHTDKFAELVCSNSLRANTLTNAVGVLKEEMRRLNSVIIDSADRCAVPAGGALAVDRHEFAAHVTDAVRNHPLVEVVSEEITEIPDGIVVIATGPLTSPALSTKLKELTGEEYLYFYDAAAPIIEKDSIDMNKVFVASRYDKGEAAYLNCPMTEEEFNRFYDALISAETVPLKEFEKEIFFEGCMPIEVLAKRGHKTMTFGPMKPVGLVDPRTGKKSYAVVQLRQDNSAATLYNIVGFQTHLKWPDQKRVFSLIPGLENCEIVRYGVMHRNTFINSPKLLKPTYQYKDRETLFFAGQMTGVEGYVESAASGLLAGINAARLAKGEELIELPPETIMGSMARYITTADPKHFQPMNANFGLVPEWPERIRDKRLKNEKLAERALDTIQNFTQERHN.

10–15 serves as a coordination point for FAD; it reads GAGLAG.

It belongs to the MnmG family. TrmFO subfamily. The cofactor is FAD.

It localises to the cytoplasm. It catalyses the reaction uridine(54) in tRNA + (6R)-5,10-methylene-5,6,7,8-tetrahydrofolate + NADH + H(+) = 5-methyluridine(54) in tRNA + (6S)-5,6,7,8-tetrahydrofolate + NAD(+). The catalysed reaction is uridine(54) in tRNA + (6R)-5,10-methylene-5,6,7,8-tetrahydrofolate + NADPH + H(+) = 5-methyluridine(54) in tRNA + (6S)-5,6,7,8-tetrahydrofolate + NADP(+). Its function is as follows. Catalyzes the folate-dependent formation of 5-methyl-uridine at position 54 (M-5-U54) in all tRNAs. This Brevibacillus brevis (strain 47 / JCM 6285 / NBRC 100599) protein is Methylenetetrahydrofolate--tRNA-(uracil-5-)-methyltransferase TrmFO.